The chain runs to 392 residues: Elongation factor Tu-3 (392 aa).

A tr-type G domain is found at 10–206; the sequence is KPHLNIGTMG…AVDTYVPMPE (197 aa). The G1 stretch occupies residues 19–26; sequence GHVDHGKT. Residue 19–26 participates in GTP binding; sequence GHVDHGKT. Residue Thr26 participates in Mg(2+) binding. Positions 63–67 are G2; the sequence is GITIN. Positions 84–87 are G3; sequence DMPG. Residues 84–88 and 139–142 each bind GTP; these read DMPGH and NKAD. Residues 139 to 142 are G4; sequence NKAD. The tract at residues 176–178 is G5; it reads SGL.

It belongs to the TRAFAC class translation factor GTPase superfamily. Classic translation factor GTPase family. EF-Tu/EF-1A subfamily. As to quaternary structure, monomer.

The protein localises to the cytoplasm. The enzyme catalyses GTP + H2O = GDP + phosphate + H(+). Functionally, GTP hydrolase that promotes the GTP-dependent binding of aminoacyl-tRNA to the A-site of ribosomes during protein biosynthesis. The protein is Elongation factor Tu-3 of Streptomyces coelicolor (strain ATCC BAA-471 / A3(2) / M145).